The chain runs to 920 residues: Puromycin-sensitive aminopeptidase (920 aa).

Substrate contacts are provided by residues E181 and 317 to 321 (GAMEN). H353 is a Zn(2+) binding site. E354 acts as the Proton acceptor in catalysis. Residues H357 and E376 each contribute to the Zn(2+) site. A 3'-nitrotyrosine modification is found at Y465. The short motif at 727–731 (RRRFK) is the Nuclear localization signal element.

It belongs to the peptidase M1 family. In terms of assembly, monomer. Zn(2+) is required as a cofactor. As to expression, widely expressed. Highest expression in brain, particularly the striatum and hippocampus. Expressed in Sertoli cells.

It is found in the cytoplasm. The protein resides in the cytosol. The protein localises to the nucleus. It catalyses the reaction Release of an N-terminal amino acid, preferentially alanine, from a wide range of peptides, amides and arylamides.. With respect to regulation, strongly inhibited by bestatin, leuhistin, actinonin, amastatin, 1,10-phenanthroline, DFP, PCMBS, Zn(2+), Cd(2+), Co(2+), Cu(2+), Hg(2+), EDTA and puromycin. Not inhibited by PMSF, and only slightly inhibited by leupeptin and aprotinin. Activity is increased by Mg(2+) and Ca(2+). Its function is as follows. Aminopeptidase with broad substrate specificity for several peptides. Involved in proteolytic events essential for cell growth and viability. May act as regulator of neuropeptide activity. Plays a role in the antigen-processing pathway for MHC class I molecules. Involved in the N-terminal trimming of cytotoxic T-cell epitope precursors. Digests the poly-Q peptides found in many cellular proteins. This chain is Puromycin-sensitive aminopeptidase (Npepps), found in Mus musculus (Mouse).